Consider the following 277-residue polypeptide: Energy-coupling factor transporter ATP-binding protein EcfA1 (277 aa).

The ABC transporter domain occupies 5 to 243 (IRAQNVSFCY…VEVLKKIGLD (239 aa)). Position 42-49 (42-49 (GHNGSGKS)) interacts with ATP.

Belongs to the ABC transporter superfamily. Energy-coupling factor EcfA family. Forms a stable energy-coupling factor (ECF) transporter complex composed of 2 membrane-embedded substrate-binding proteins (S component), 2 ATP-binding proteins (A component) and 2 transmembrane proteins (T component).

It localises to the cell membrane. Its function is as follows. ATP-binding (A) component of a common energy-coupling factor (ECF) ABC-transporter complex. Unlike classic ABC transporters this ECF transporter provides the energy necessary to transport a number of different substrates. The chain is Energy-coupling factor transporter ATP-binding protein EcfA1 from Caldanaerobacter subterraneus subsp. tengcongensis (strain DSM 15242 / JCM 11007 / NBRC 100824 / MB4) (Thermoanaerobacter tengcongensis).